Here is a 198-residue protein sequence, read N- to C-terminus: Guanylate kinase (198 aa).

Gly-2 carries the post-translational modification N-acetylglycine. Residues 4-186 (PRPVVLSGPS…AYWALKEALS (183 aa)) enclose the Guanylate kinase-like domain. 14-19 (GAGKST) provides a ligand contact to ATP. Substrate is bound at residue 37-51 (SHTTRDPRPGEENGK). Catalysis depends on residues Arg-44, Arg-137, and Arg-148. ATP is bound at residue 171–172 (ND).

This sequence belongs to the guanylate kinase family. As to quaternary structure, monomer. Interacts with RD3.

Its subcellular location is the photoreceptor inner segment. The protein localises to the cytoplasm. The protein resides in the cytosol. It catalyses the reaction GMP + ATP = GDP + ADP. With respect to regulation, up-regulated by RD3. Its function is as follows. Catalyzes the phosphorylation of GMP to GDP. Essential enzyme for recycling GMP and indirectly, cyclic GMP (cGMP). Involved in the cGMP metabolism in photoreceptors. This is Guanylate kinase (GUK1) from Sus scrofa (Pig).